We begin with the raw amino-acid sequence, 176 residues long: Protein GrpE (176 aa).

This sequence belongs to the GrpE family. As to quaternary structure, homodimer.

The protein resides in the cytoplasm. Functionally, participates actively in the response to hyperosmotic and heat shock by preventing the aggregation of stress-denatured proteins, in association with DnaK and GrpE. It is the nucleotide exchange factor for DnaK and may function as a thermosensor. Unfolded proteins bind initially to DnaJ; upon interaction with the DnaJ-bound protein, DnaK hydrolyzes its bound ATP, resulting in the formation of a stable complex. GrpE releases ADP from DnaK; ATP binding to DnaK triggers the release of the substrate protein, thus completing the reaction cycle. Several rounds of ATP-dependent interactions between DnaJ, DnaK and GrpE are required for fully efficient folding. This Meiothermus ruber protein is Protein GrpE.